A 456-amino-acid chain; its full sequence is MITPLAKTAPAPRYLYVRTFGCQMNEYDSQRALRLLCAVGYRPTSDIADADVIFLNTCSVRDKAEQKVYSFLGRLRRLKAHRPWLKIVVAGCVAQQLGDGLLKRFEHVDLVVGTRGIGSIASLLEEVERSKRRVAHLPAEELQGFTTDKCRTVGTGDVVAQVTIMQGCNNFCTYCIVPHVRGRERSRAPDDILREIDFLASRGAREVLLLGQNVNSYGRGLPDPISFPDLLRRIGKETSIRRVRFTTSHPKDLTEDLIECFAGLPFLCKHLHLPFQSGSDGILKLMHRGYTARQYLEKIARLREVCPEIALSTDVIVGFPAESEEDYLQTLRLIEEVRFDSLFSFRYSDRPLTRAAGFPDKVPMDVKVRRLARLQSIQADITLQKNLAETGTVREVLVEGPSKASNGQMTGRTQQNRIINFQCPVDLTGKIVPVRIVAAYSHSLKGELLSQPGKES.

The MTTase N-terminal domain occupies 13 to 129 (RYLYVRTFGC…IASLLEEVER (117 aa)). Residues Cys-22, Cys-58, Cys-92, Cys-168, Cys-172, and Cys-175 each coordinate [4Fe-4S] cluster. The Radical SAM core domain occupies 154–384 (GTGDVVAQVT…QSIQADITLQ (231 aa)). A TRAM domain is found at 387–450 (LAETGTVREV…SHSLKGELLS (64 aa)).

It belongs to the methylthiotransferase family. MiaB subfamily. As to quaternary structure, monomer. It depends on [4Fe-4S] cluster as a cofactor.

The protein localises to the cytoplasm. It catalyses the reaction N(6)-dimethylallyladenosine(37) in tRNA + (sulfur carrier)-SH + AH2 + 2 S-adenosyl-L-methionine = 2-methylsulfanyl-N(6)-dimethylallyladenosine(37) in tRNA + (sulfur carrier)-H + 5'-deoxyadenosine + L-methionine + A + S-adenosyl-L-homocysteine + 2 H(+). In terms of biological role, catalyzes the methylthiolation of N6-(dimethylallyl)adenosine (i(6)A), leading to the formation of 2-methylthio-N6-(dimethylallyl)adenosine (ms(2)i(6)A) at position 37 in tRNAs that read codons beginning with uridine. The sequence is that of tRNA-2-methylthio-N(6)-dimethylallyladenosine synthase from Syntrophobacter fumaroxidans (strain DSM 10017 / MPOB).